We begin with the raw amino-acid sequence, 622 residues long: Chaperone protein HscA homolog (622 aa).

The protein belongs to the heat shock protein 70 family.

Chaperone involved in the maturation of iron-sulfur cluster-containing proteins. Has a low intrinsic ATPase activity which is markedly stimulated by HscB. The chain is Chaperone protein HscA homolog from Burkholderia mallei (strain NCTC 10247).